The chain runs to 499 residues: BTB/POZ domain-containing protein 16 (499 aa).

Residues 143–199 (INDPLVTREAFATALKNLYMQEVKICLDDVLGVLAAAHILQFGSLFQRCVTVMMSGL) enclose the BTB domain.

This is BTB/POZ domain-containing protein 16 (BTBD16) from Bos taurus (Bovine).